The following is a 669-amino-acid chain: DNA mismatch repair protein MutL (669 aa).

A disordered region spans residues 343-408 (SAFHRAEPEE…RAPSDSSVRE (66 aa)). Residues 344 to 356 (AFHRAEPEERESQ) show a composition bias toward basic and acidic residues. The segment covering 357-372 (PETTPQYSPQSVSTTV) has biased composition (polar residues). Over residues 390-408 (TDYEIKPRDRAPSDSSVRE) the composition is skewed to basic and acidic residues.

The protein belongs to the DNA mismatch repair MutL/HexB family.

Its function is as follows. This protein is involved in the repair of mismatches in DNA. It is required for dam-dependent methyl-directed DNA mismatch repair. May act as a 'molecular matchmaker', a protein that promotes the formation of a stable complex between two or more DNA-binding proteins in an ATP-dependent manner without itself being part of a final effector complex. This Vibrio parahaemolyticus serotype O3:K6 (strain RIMD 2210633) protein is DNA mismatch repair protein MutL.